The primary structure comprises 207 residues: Large ribosomal subunit protein uL4 (207 aa).

The tract at residues Ala-55 to Gly-76 is disordered. The span at Lys-63 to Gly-76 shows a compositional bias: basic residues.

It belongs to the universal ribosomal protein uL4 family. Part of the 50S ribosomal subunit.

Its function is as follows. One of the primary rRNA binding proteins, this protein initially binds near the 5'-end of the 23S rRNA. It is important during the early stages of 50S assembly. It makes multiple contacts with different domains of the 23S rRNA in the assembled 50S subunit and ribosome. Functionally, forms part of the polypeptide exit tunnel. This chain is Large ribosomal subunit protein uL4, found in Phytoplasma mali (strain AT).